The primary structure comprises 184 residues: Oligoribonuclease (184 aa).

An Exonuclease domain is found at 9–172; the sequence is LIWIDLEMTG…DDIRESIEEL (164 aa). Tyr-130 is an active-site residue.

Belongs to the oligoribonuclease family.

It localises to the cytoplasm. In terms of biological role, 3'-to-5' exoribonuclease specific for small oligoribonucleotides. This chain is Oligoribonuclease, found in Actinobacillus pleuropneumoniae serotype 5b (strain L20).